The following is a 563-amino-acid chain: DNA mismatch repair protein MutL (563 aa).

This sequence belongs to the DNA mismatch repair MutL/HexB family.

In terms of biological role, this protein is involved in the repair of mismatches in DNA. It is required for dam-dependent methyl-directed DNA mismatch repair. May act as a 'molecular matchmaker', a protein that promotes the formation of a stable complex between two or more DNA-binding proteins in an ATP-dependent manner without itself being part of a final effector complex. In Trichormus variabilis (strain ATCC 29413 / PCC 7937) (Anabaena variabilis), this protein is DNA mismatch repair protein MutL.